Reading from the N-terminus, the 551-residue chain is Cytochrome c oxidase subunit 1 (551 aa).

A helical membrane pass occupies residues 34 to 54 (TLYLYSGVWGGLFGASLSLMI). Residue G62 participates in Ca(2+) binding. Residue H79 coordinates Fe(II)-heme a. 6 helical membrane passes run 81–101 (LMMI…NWLI), 126–146 (ALYL…GWTI), 163–183 (VLIV…INFA), 209–229 (TAVL…MILF), 252–272 (LFWF…FGVM), and 285–305 (VFGL…GCMV). Residue H258 coordinates Cu cation. The segment at residues 258-262 (HPEVY) is a cross-link (1'-histidyl-3'-tyrosine (His-Tyr)). An O2-binding site is contributed by Y262. The Cu cation site is built by H308 and H309. Transmembrane regions (helical) follow at residues 326–346 (ATMV…ATMA) and 356–376 (AYWS…GVLL). Positions 386 and 387 each coordinate Mg(2+). Helical transmembrane passes span 391–411 (VVAH…FCGL), 432–452 (FMAM…LGLS), and 475–495 (GSAV…EALV). H394 contributes to the heme a3 binding site. H396 provides a ligand contact to Fe(II)-heme a.

Belongs to the heme-copper respiratory oxidase family. Component of the cytochrome c oxidase (complex IV, CIV), a multisubunit enzyme composed of a catalytic core of 3 subunits and several supernumerary subunits. The complex exists as a monomer or a dimer and forms supercomplexes (SCs) in the inner mitochondrial membrane with ubiquinol-cytochrome c oxidoreductase (cytochrome b-c1 complex, complex III, CIII). It depends on heme as a cofactor. Cu cation serves as cofactor.

The protein resides in the mitochondrion inner membrane. The catalysed reaction is 4 Fe(II)-[cytochrome c] + O2 + 8 H(+)(in) = 4 Fe(III)-[cytochrome c] + 2 H2O + 4 H(+)(out). It participates in energy metabolism; oxidative phosphorylation. Component of the cytochrome c oxidase, the last enzyme in the mitochondrial electron transport chain which drives oxidative phosphorylation. The respiratory chain contains 3 multisubunit complexes succinate dehydrogenase (complex II, CII), ubiquinol-cytochrome c oxidoreductase (cytochrome b-c1 complex, complex III, CIII) and cytochrome c oxidase (complex IV, CIV), that cooperate to transfer electrons derived from NADH and succinate to molecular oxygen, creating an electrochemical gradient over the inner membrane that drives transmembrane transport and the ATP synthase. Cytochrome c oxidase is the component of the respiratory chain that catalyzes the reduction of oxygen to water. Electrons originating from reduced cytochrome c in the intermembrane space (IMS) are transferred via the dinuclear copper A center (CU(A)) of subunit 2 and heme A of subunit 1 to the active site in subunit 1, a binuclear center (BNC) formed by heme A3 and copper B (CU(B)). The BNC reduces molecular oxygen to 2 water molecules using 4 electrons from cytochrome c in the IMS and 4 protons from the mitochondrial matrix. The chain is Cytochrome c oxidase subunit 1 (COI) from Mytilus edulis (Blue mussel).